We begin with the raw amino-acid sequence, 677 residues long: Multicopper oxidase GIP1 (677 aa).

An N-terminal signal peptide occupies residues 1 to 23; that stretch reads MLTSPRLILLLLAWVFSALVASA. Plastocyanin-like domains lie at 31–150 and 179–379; these read ITWE…IRRK and LVMV…RYKG. Asparagine 76 carries an N-linked (GlcNAc...) asparagine glycan. The Cu cation site is built by histidine 80, histidine 82, histidine 130, and histidine 132. N-linked (GlcNAc...) asparagine glycans are attached at residues asparagine 228, asparagine 283, asparagine 396, and asparagine 478. In terms of domain architecture, Plastocyanin-like 3 spans 469–588; sequence DEGLVIRTKN…AGGMAIAILD (120 aa). Histidine 503 provides a ligand contact to Cu cation. The N-linked (GlcNAc...) asparagine glycan is linked to asparagine 520. Positions 629–651 are disordered; sequence PLLAVSPSGGPKKDSGETSASDS.

Belongs to the multicopper oxidase family. In terms of assembly, might be part of an extracellular enzyme complex composed of GIP1, aurF, aurO and aurS.

It is found in the secreted. The protein localises to the extracellular space. The protein operates within pigment biosynthesis. In terms of biological role, multicopper oxidase; part of the gene cluster that mediates the biosynthesis of aurofusarin, a red mycelium pigment which is acting as a mycotoxin. The first step is performed by the polyketide synthase which condenses one acetyl-CoA and 6 malonyl-CoA units to form the first intermediate, the cyclic heptaketide and yellow pigment YWA1. The C2 hydroxyl group in the pyrone ring of YWA1 is probably formed during ring closure by an aldol-type cyclization reaction. The dehydratase aurZ then acts as the first tailoring enzyme in the aurofusarin biosynthetic pathway by converting YWA1 to nor-rubrofusarin. Nor-rubrofusarin is then methylated to rubrofusarin by the O-methyltransferase aurJ. Rubrofusarin is then transported across the plasma membrane by the rubrofusarin-specific pump aurT for further enzymatic processing by the extracellular complex composed of GIP1, aurF, aurO and aurS to yield aurofusarin. This Gibberella zeae (strain ATCC MYA-4620 / CBS 123657 / FGSC 9075 / NRRL 31084 / PH-1) (Wheat head blight fungus) protein is Multicopper oxidase GIP1.